A 233-amino-acid polypeptide reads, in one-letter code: Eosinophil granule major basic protein 1 (233 aa).

A signal peptide spans 1-15 (MKLLLLLALLLGAVS). Positions 16 to 114 (TRHLKVDTSS…VKFFSRPGYK (99 aa)) are cleaved as a propeptide — acidic. Residues 24 to 96 (SSLQSLRGEE…SELDVSPEDI (73 aa)) are disordered. Residues 42–57 (AEGATREATAGALMPL) are compositionally biased toward low complexity. A compositionally biased stretch (acidic residues) spans 58–93 (PEEEEMEGASGSEDDPEEEEEEEEEVEFSSELDVSP). A C-type lectin domain is found at 132-233 (WVCQRCYRGN…GKRRPFVCTY (102 aa)). 2 cysteine pairs are disulfide-bonded: Cys-134-Cys-231 and Cys-208-Cys-223.

In terms of processing, nitrated.

Its subcellular location is the cytoplasmic granule. MBP may play some important roles in the allergic reactions and inflammations, since MBP is capable of releasing histamine from mast cells and damaging the epithelial cells of bronchial tubes. Antiparasitic and antibiotic. This is Eosinophil granule major basic protein 1 (MBP1) from Cavia porcellus (Guinea pig).